An 862-amino-acid polypeptide reads, in one-letter code: Protein JOKA2 (862 aa).

The PB1 domain maps to 6–90; the sequence is SIVIKVKYEE…NPLRISARLN (85 aa). The span at 92-106 shows a compositional bias: low complexity; the sequence is GERSGRASARSSGNS. Disordered regions lie at residues 92 to 117, 194 to 234, and 295 to 345; these read GERS…VQPP, KGNT…ASNE, and VRNS…DSSG. A compositionally biased stretch (polar residues) spans 325–345; the sequence is SASSSKVKQCNWDSPNADSSG. A ZZ-type; degenerate zinc finger spans residues 442 to 492; it reads HKGVRCDGCGVHPITGPRFISKVKENYDLCSICFAEMGNDADYIRMDRPLT. Zn(2+) contacts are provided by Cys-447, Cys-450, Cys-471, and Cys-474. The UBA domain maps to 811–860; sequence SVDDLCGVAEWDPILEELKEMGFCDKEMNKKLLKKNNGSIKRVVMDLIAG. The ATG8 interacting motif (AIM) motif lies at 817 to 824; that stretch reads GVAEWDPI.

As to quaternary structure, interacts (via C-terminal AIM motif) with ATG8CL.

Its subcellular location is the vacuole. The protein resides in the cytoplasmic vesicle. The protein localises to the autophagosome. Autophagic substrate that functions as a host autophagy cargo receptor. Requires ATG8 protein expression to be recognized as an autophagic substrate. Activates ATG8CL-mediated selective autophagy, and contributes to defense against the fungal pathogen Phytophtora infestans. The protein is Protein JOKA2 of Solanum tuberosum (Potato).